The following is a 172-amino-acid chain: S-ribosylhomocysteine lyase (172 aa).

Residues His-54, His-58, and Cys-128 each contribute to the Fe cation site.

This sequence belongs to the LuxS family. In terms of assembly, homodimer. It depends on Fe cation as a cofactor.

The enzyme catalyses S-(5-deoxy-D-ribos-5-yl)-L-homocysteine = (S)-4,5-dihydroxypentane-2,3-dione + L-homocysteine. Functionally, involved in the synthesis of autoinducer 2 (AI-2) which is secreted by bacteria and is used to communicate both the cell density and the metabolic potential of the environment. The regulation of gene expression in response to changes in cell density is called quorum sensing. Catalyzes the transformation of S-ribosylhomocysteine (RHC) to homocysteine (HC) and 4,5-dihydroxy-2,3-pentadione (DPD). This is S-ribosylhomocysteine lyase from Vibrio cholerae serotype O1 (strain ATCC 39541 / Classical Ogawa 395 / O395).